A 121-amino-acid chain; its full sequence is Small ribosomal subunit protein uS13 (121 aa).

The disordered stretch occupies residues 93 to 121 (RKGLPVRGQKTKTNARTRKGKRKTVGAKS).

This sequence belongs to the universal ribosomal protein uS13 family. Part of the 30S ribosomal subunit. Forms a loose heterodimer with protein S19. Forms two bridges to the 50S subunit in the 70S ribosome.

Functionally, located at the top of the head of the 30S subunit, it contacts several helices of the 16S rRNA. In the 70S ribosome it contacts the 23S rRNA (bridge B1a) and protein L5 of the 50S subunit (bridge B1b), connecting the 2 subunits; these bridges are implicated in subunit movement. Contacts the tRNAs in the A and P-sites. In Campylobacter lari (strain RM2100 / D67 / ATCC BAA-1060), this protein is Small ribosomal subunit protein uS13.